A 493-amino-acid chain; its full sequence is Cobyric acid synthase (493 aa).

Positions 246–440 (PIDIAVIKMP…IHGVFDGIVF (195 aa)) constitute a GATase cobBQ-type domain. The active-site Nucleophile is the C326. H432 is a catalytic residue.

Belongs to the CobB/CobQ family. CobQ subfamily.

Its pathway is cofactor biosynthesis; adenosylcobalamin biosynthesis. Functionally, catalyzes amidations at positions B, D, E, and G on adenosylcobyrinic A,C-diamide. NH(2) groups are provided by glutamine, and one molecule of ATP is hydrogenolyzed for each amidation. The protein is Cobyric acid synthase of Clostridium botulinum (strain 657 / Type Ba4).